A 1434-amino-acid chain; its full sequence is Receptor-type tyrosine-protein phosphatase U (1434 aa).

The N-terminal stretch at 1-17 (MRSARALLLALALRVCA) is a signal peptide. The Extracellular portion of the chain corresponds to 18 to 748 (LDSETPSAGC…QHSEEMGLIL (731 aa)). Residues 25-187 (AGCTFEEDDD…ILLLNYPCSK (163 aa)) form the MAM domain. A glycan (N-linked (GlcNAc...) asparagine) is linked at Asn-74. One can recognise an Ig-like C2-type domain in the interval 189–274 (PHFSRLGDVE…TQSSRGSGVS (86 aa)). Cys-209 and Cys-263 are oxidised to a cystine. 4 Fibronectin type-III domains span residues 287–382 (PIAP…CAEP), 385–483 (APKG…TDED), 484–590 (VPGG…SAPT), and 597–677 (PSPL…TEAK). An N-linked (GlcNAc...) asparagine glycan is attached at Asn-409. The N-linked (GlcNAc...) asparagine glycan is linked to Asn-684. The helical transmembrane segment at 749-769 (GICAGGLVVLIILLGAIIVVI) threads the bilayer. At 770–1434 (RKGKPVNMTK…LEYLESLETR (665 aa)) the chain is on the cytoplasmic side. Residues 824 to 839 (RGDQRSSVVNESSSLL) show a composition bias toward polar residues. Residues 824-851 (RGDQRSSVVNESSSLLGGSPRRQCGRKG) form a disordered region. Tyrosine-protein phosphatase domains lie at 876–1132 (KTAE…ILEA) and 1164–1427 (LREE…ALEY). Substrate-binding positions include Glu-1041, 1073–1079 (CSAGTGR), and Gln-1117. Cys-1073 functions as the Phosphocysteine intermediate in the catalytic mechanism. Cys-1368 (phosphocysteine intermediate) is an active-site residue.

Belongs to the protein-tyrosine phosphatase family. Receptor class 2B subfamily.

It localises to the cell junction. It is found in the cell membrane. The catalysed reaction is O-phospho-L-tyrosyl-[protein] + H2O = L-tyrosyl-[protein] + phosphate. Functionally, tyrosine-protein phosphatase which dephosphorylates CTNNB1. May function in cell proliferation and migration and play a role in the maintenance of epithelial integrity. The sequence is that of Receptor-type tyrosine-protein phosphatase U (PTPRU) from Gallus gallus (Chicken).